A 125-amino-acid polypeptide reads, in one-letter code: MSDKYIGDSHLEETGEEKQDSQEKEAVTPEKAEEQKLKAKYPNLGQKPGGSDFLMKRLQKGQKYFDSGDYNMAKAKIKNKQLPCAGPDKNLVTGDHIPTPQDLPQRKSSLVTSKLAGHVEDLHHV.

A compositionally biased stretch (basic and acidic residues) spans 1 to 37; sequence MSDKYIGDSHLEETGEEKQDSQEKEAVTPEKAEEQKL. A disordered region spans residues 1 to 52; it reads MSDKYIGDSHLEETGEEKQDSQEKEAVTPEKAEEQKLKAKYPNLGQKPGGSD. At threonine 28 the chain carries Phosphothreonine; by CDK2. The residue at position 67 (serine 67) is a Phosphoserine; by GWL. The interval 86–107 is disordered; it reads GPDKNLVTGDHIPTPQDLPQRK. At threonine 99 the chain carries Phosphothreonine; by CDK2. At serine 109 the chain carries Phosphoserine; by PKA.

The protein belongs to the endosulfine family. In terms of assembly, interacts (when phosphorylated at Ser-67) with ppp2r2d. Phosphorylation at Ser-67 by gwl during mitosis is essential for interaction with PPP2R2D (PR55-delta) and subsequent inactivation of PP2A. Phosphorylated by PKA.

Its subcellular location is the cytoplasm. Protein phosphatase inhibitor that specifically inhibits protein phosphatase 2A (PP2A) during mitosis. When phosphorylated at Ser-67 during mitosis, specifically interacts with ppp2r2d (PR55-delta) and inhibits its activity, leading to inactivation of PP2A, an essential condition to keep cyclin-B1-CDK1 activity high during M phase. This is Alpha-endosulfine (ensa) from Xenopus laevis (African clawed frog).